Consider the following 174-residue polypeptide: UPF0316 protein lin1888 (174 aa).

The next 3 helical transmembrane spans lie at 4-24 (GIFI…IYTV), 36-56 (LAAL…SLVL), and 62-82 (IANV…GMKI).

It belongs to the UPF0316 family.

The protein localises to the cell membrane. The chain is UPF0316 protein lin1888 from Listeria innocua serovar 6a (strain ATCC BAA-680 / CLIP 11262).